Reading from the N-terminus, the 1128-residue chain is Nck-associated protein 1 (1128 aa).

Positions 640–665 (AVNKKSKKQTGKKGEPEREKPGVESM) are disordered. A compositionally biased stretch (basic and acidic residues) spans 651 to 665 (KKGEPEREKPGVESM). Residues 995-1015 (IACLLMVFVAVSMPTLASNVM) traverse the membrane as a helical segment.

Belongs to the HEM-1/HEM-2 family.

The protein localises to the cell membrane. Its subcellular location is the cell projection. It is found in the lamellipodium membrane. Its function is as follows. Part of the WAVE complex that regulates lamellipodia formation. The WAVE complex regulates actin filament reorganization via its interaction with the Arp2/3 complex. Actin remodeling activity is regulated by RAC1. Plays a role in neural tube closure. In Danio rerio (Zebrafish), this protein is Nck-associated protein 1 (nckap1).